The sequence spans 487 residues: Cell wall protein TIR4 (487 aa).

Residues 1–22 form the signal peptide; sequence MAYSKITLLAALAAIAYAQTQA. 11 repeat units span residues 137–148, 149–160, 161–172, 173–184, 185–196, 197–208, 209–220, 221–232, 233–244, 245–256, and 257–268. An 11 X 12 AA approximate tandem repeats, Ser-rich region spans residues 137–268; that stretch reads SSSVAPSSSE…SVASSTSEAT (132 aa). The disordered stretch occupies residues 206–299; the sequence is EVASSSVAPS…SVSSSSAVSS (94 aa). N-linked (GlcNAc...) asparagine glycans are attached at residues N327, N348, N368, N403, and N404. N465 carries the GPI-anchor amidated asparagine lipid modification. The propeptide at 466-487 is removed in mature form; that stretch reads GAAKAVIGMGAGALAAVAAMLL.

The protein belongs to the SRP1/TIP1 family. Post-translationally, the GPI-anchor is attached to the protein in the endoplasmic reticulum and serves to target the protein to the cell surface. There, the glucosamine-inositol phospholipid moiety is cleaved off and the GPI-modified mannoprotein is covalently attached via its lipidless GPI glycan remnant to the 1,6-beta-glucan of the outer cell wall layer.

It localises to the secreted. Its subcellular location is the cell wall. It is found in the membrane. In terms of biological role, component of the cell wall. Required for anaerobic growth. The protein is Cell wall protein TIR4 (TIR4) of Saccharomyces cerevisiae (strain ATCC 204508 / S288c) (Baker's yeast).